The following is a 389-amino-acid chain: Mesotocin receptor (389 aa).

Topologically, residues M1–V50 are extracellular. N-linked (GlcNAc...) asparagine glycosylation is found at N15, N20, N27, and N31. The helical transmembrane segment at L51–I71 threads the bilayer. Over N72 to S87 the chain is Cytoplasmic. A helical membrane pass occupies residues I88–F108. Residues R109–L119 are Extracellular-facing. The cysteines at positions 117 and 192 are disulfide-linked. The helical transmembrane segment at V120–L140 threads the bilayer. At D141–C159 the chain is on the cytoplasmic side. A helical transmembrane segment spans residues V160–F180. At S181–T207 the chain is on the extracellular side. The helical transmembrane segment at W208–I228 threads the bilayer. The Cytoplasmic segment spans residues S229–M275. The chain crosses the membrane as a helical span at residues T276 to W296. Topologically, residues S297–S308 are extracellular. The chain crosses the membrane as a helical span at residues L309–M329. Topologically, residues L330–A389 are cytoplasmic. Residues L360–A389 are disordered.

It belongs to the G-protein coupled receptor 1 family. Vasopressin/oxytocin receptor subfamily. As to expression, highly expressed in the bladder. Also expressed in kidney, brain and skeletal muscle.

The protein resides in the cell membrane. Functionally, binds to mesotocin and may play a role in the regulation of water and salt transport. This chain is Mesotocin receptor, found in Rhinella marina (Cane toad).